We begin with the raw amino-acid sequence, 86 residues long: Myosin light chain alkali (86 aa).

Positions 11-46 constitute an EF-hand domain; sequence GCYEDFIECLKLYDKEENGTMMLAELQHALLALGES.

Myosin is a hexamer of 2 heavy chains and 4 light chains.

The protein is Myosin light chain alkali (Mlc1) of Drosophila subobscura (Fruit fly).